We begin with the raw amino-acid sequence, 108 residues long: Parvalbumin beta 2 (108 aa).

A1 carries the post-translational modification N-acetylalanine. EF-hand domains lie at 38 to 73 (KSAADIKKVFGIIDQDKSDFVEEDELKLFLQNFSAG) and 77 to 108 (LTDAETATFLKAGDSDGDGKIGVDEFAAMVKG). Ca(2+)-binding residues include D51, D53, S55, F57, E59, E62, D90, D92, D94, K96, and E101.

This sequence belongs to the parvalbumin family.

Its function is as follows. In muscle, parvalbumin is thought to be involved in relaxation after contraction. It binds two calcium ions. The sequence is that of Parvalbumin beta 2 from Merluccius bilinearis (Silver hake).